A 515-amino-acid polypeptide reads, in one-letter code: 2,3-bisphosphoglycerate-independent phosphoglycerate mutase (515 aa).

Mn(2+) contacts are provided by D14 and S64. The Phosphoserine intermediate role is filled by S64. Substrate is bound by residues H125, 155 to 156, R187, R193, 263 to 266, and K337; these read RD and RADR. D404, H408, D445, H446, and H464 together coordinate Mn(2+).

This sequence belongs to the BPG-independent phosphoglycerate mutase family. Monomer. The cofactor is Mn(2+).

The enzyme catalyses (2R)-2-phosphoglycerate = (2R)-3-phosphoglycerate. It participates in carbohydrate degradation; glycolysis; pyruvate from D-glyceraldehyde 3-phosphate: step 3/5. Its function is as follows. Catalyzes the interconversion of 2-phosphoglycerate and 3-phosphoglycerate. The protein is 2,3-bisphosphoglycerate-independent phosphoglycerate mutase of Yersinia pseudotuberculosis serotype I (strain IP32953).